The primary structure comprises 422 residues: Probable metallocarboxypeptidase A (422 aa).

The N-terminal stretch at 1–17 is a signal peptide; the sequence is MRSVLSLALLAVNVVTA. The propeptide at 18–112 is activation peptide; sequence AVVAPFDYSG…FEAYSAGYAP (95 aa). One can recognise a Peptidase M14 domain in the interval 119-419; that stretch reads SYHSYQDHLS…AGTVAMLKAV (301 aa). 2 residues coordinate Zn(2+): His179 and Glu182. Substrate contacts are provided by residues 179-182, Arg237, and 254-255; these read HARE and NR. An intrachain disulfide couples Cys248 to Cys271. His309 lines the Zn(2+) pocket. 310 to 311 serves as a coordination point for substrate; it reads SY. The Proton donor/acceptor role is filled by Glu385.

Belongs to the peptidase M14 family. Zn(2+) is required as a cofactor.

It localises to the secreted. Extracellular metalloprotease that contributes to pathogenicity. This chain is Probable metallocarboxypeptidase A (MCPA), found in Trichophyton verrucosum (strain HKI 0517).